We begin with the raw amino-acid sequence, 404 residues long: uncharacterized protein (404 aa).

This sequence belongs to the lymphocryptovirus BTRF1 family.

This is an uncharacterized protein from Epstein-Barr virus (strain GD1) (HHV-4).